A 513-amino-acid chain; its full sequence is Maturase K (513 aa).

It belongs to the intron maturase 2 family. MatK subfamily.

It localises to the plastid. Its subcellular location is the chloroplast. Usually encoded in the trnK tRNA gene intron. Probably assists in splicing its own and other chloroplast group II introns. The protein is Maturase K of Byblis liniflora (Carnivorous plant).